The chain runs to 353 residues: GDSL esterase/lipase At5g03810 (353 aa).

Positions 1–24 are cleaved as a signal peptide; sequence MKMFITMSMCLSVIACFYAGVGTG. The Nucleophile role is filled by S37. N100, N255, N256, N260, and N320 each carry an N-linked (GlcNAc...) asparagine glycan. Catalysis depends on residues D328 and H331.

The protein belongs to the 'GDSL' lipolytic enzyme family.

The protein resides in the secreted. This Arabidopsis thaliana (Mouse-ear cress) protein is GDSL esterase/lipase At5g03810.